A 488-amino-acid polypeptide reads, in one-letter code: Microtubule-destabilizing protein 60 (488 aa).

Over residues Ala-25–Lys-56 the composition is skewed to polar residues. 3 disordered regions span residues Ala-25–Pro-71, His-262–Gln-304, and Asp-436–Asn-457. Over residues Ser-264–Gly-280 the composition is skewed to low complexity.

It belongs to the TPX2 family.

The protein localises to the cytoplasm. It localises to the cytoskeleton. Binds directly to microtubules. Microtubule-destabilizing protein involved in the PIF3-dependent positive regulation of hypocotyl cell elongation via the modulation of cortical microtubules dynamic in response to light and ethylene signaling. Promotes submergence-induced and ethylene-dependent underwater hypocotyl elongation. This is Microtubule-destabilizing protein 60 from Arabidopsis thaliana (Mouse-ear cress).